Here is a 340-residue protein sequence, read N- to C-terminus: Cathepsin S (340 aa).

An N-terminal signal peptide occupies residues 1-17 (MRAPGHAAIRWLFWMPL). Positions 18–122 (VCSVAMEQLQ…VTFRSYSNRT (105 aa)) are cleaved as a propeptide — activation peptide. Asparagine 120 is a glycosylation site (N-linked (GlcNAc...) asparagine). Cystine bridges form between cysteine 134–cysteine 233, cysteine 144–cysteine 189, cysteine 178–cysteine 222, and cysteine 281–cysteine 329. Residue cysteine 147 is part of the active site. Catalysis depends on residues histidine 287 and asparagine 307.

It belongs to the peptidase C1 family. As to expression, widely expressed with highest expression found in non-skeletal tissues. Relatively high levels found in skeletal tissues. Expressed in spleen, B cells, dendritic cells and macrophages.

It localises to the lysosome. The protein localises to the secreted. Its subcellular location is the cytoplasmic vesicle. It is found in the phagosome. It carries out the reaction Similar to cathepsin L, but with much less activity on Z-Phe-Arg-|-NHMec, and more activity on the Z-Val-Val-Arg-|-Xaa compound.. Thiol protease. Key protease responsible for the removal of the invariant chain from MHC class II molecules and MHC class II antigen presentation. The bond-specificity of this proteinase is in part similar to the specificities of cathepsin L. In Mus musculus (Mouse), this protein is Cathepsin S (Ctss).